We begin with the raw amino-acid sequence, 33 residues long: Mytimycin (33 aa).

It is found in the secreted. Has antifungal activity against N.crassa and F.culmorum. In Mytilus edulis (Blue mussel), this protein is Mytimycin.